Here is a 255-residue protein sequence, read N- to C-terminus: Small ribosomal subunit protein eS1 (255 aa).

N-acetylalanine; partial is present on Ala2.

Belongs to the eukaryotic ribosomal protein eS1 family. In terms of assembly, component of the small ribosomal subunit. Mature ribosomes consist of a small (40S) and a large (60S) subunit. The 40S subunit contains about 33 different proteins and 1 molecule of RNA (18S). The 60S subunit contains about 49 different proteins and 3 molecules of RNA (25S, 5.8S and 5S).

It is found in the cytoplasm. The chain is Small ribosomal subunit protein eS1 from Vanderwaltozyma polyspora (strain ATCC 22028 / DSM 70294 / BCRC 21397 / CBS 2163 / NBRC 10782 / NRRL Y-8283 / UCD 57-17) (Kluyveromyces polysporus).